We begin with the raw amino-acid sequence, 3461 residues long: Abnormal spindle-like microcephaly-associated protein homolog (3461 aa).

Positions 1–30 (MATRRAGRSWEVSPTERRPSARPRNSAAEE) are disordered. Phosphoserine occurs at positions 279, 282, 367, 392, 426, and 606. Residues 921–1057 (KTSKEILLAF…LLWKIAFAFQ (137 aa)) enclose the Calponin-homology (CH) 1 domain. A coiled-coil region spans residues 1058-1077 (VDISLNLDQLKEEIDFLKHT). Ser-1104 is modified (phosphoserine). Residues 1111–1262 (SESIKLLMDW…YLSFLCARLL (152 aa)) form the Calponin-homology (CH) 2 domain. IQ domains lie at 1267–1296 (ETRA…RDKA), 1348–1379 (QNKS…VILQ), 1488–1517 (LRSC…AILT), 1511–1540 (RREA…QKRA), 1538–1569 (KRAA…VFQS), 1583–1614 (LKKI…LIIQ), 1633–1662 (TRSA…SIIK), 1656–1685 (ILTS…ATVK), 1729–1758 (MRES…AAVS), 1752–1783 (QRKA…VVIQ), 1775–1804 (MYKA…QVKR), 1802–1831 (VKRA…AALK), 1825–1854 (QSIA…STIK), 1875–1904 (TKAA…AAVR), 1898–1929 (ELQA…LVIQ), 1948–1979 (LRNA…VIIQ), 1971–2002 (QHKC…RLIQ), 2021–2050 (TKAA…AAVA), 2044–2075 (YNKA…VLIQ), 2094–2125 (LKKT…TFIK), 2117–2148 (MHTA…VLIQ), 2167–2198 (ILKA…IRIQ), 2190–2219 (MQNA…VTQT), 2240–2271 (LRHS…TLIQ), 2313–2344 (LQKA…TVIQ), 2336–2367 (MHRA…VVIQ), 2386–2417 (QRHS…VLIQ), 2409–2440 (MHSS…VFVQ), 2459–2490 (VQKA…ALIQ), 2532–2563 (QRHS…IIIQ), 2666–2697 (RTQA…TLIQ), 2689–2720 (MHLA…VLIQ), 2739–2768 (LQKS…AKMA), 2837–2866 (QKHA…AAVT), 2860–2891 (QKRA…SVLQ), 2910–2939 (VRSS…STIK), 2933–2964 (IKDS…KIQA), 2955–2986 (KVKA…KVIQ), 3030–3059 (RHQA…AALT), 3080–3111 (LKKS…RLLH), 3182–3211 (QNRA…GITK), and 3205–3236 (INNG…IRLS).

It localises to the cytoplasm. It is found in the cytoskeleton. The protein resides in the spindle. Its subcellular location is the nucleus. Its function is as follows. Probable role in mitotic spindle regulation and coordination of mitotic processes. May have a preferential role in regulating neurogenesis. This Felis catus (Cat) protein is Abnormal spindle-like microcephaly-associated protein homolog (ASPM).